The chain runs to 55 residues: Small ribosomal subunit protein bS21 (55 aa).

The protein belongs to the bacterial ribosomal protein bS21 family.

The chain is Small ribosomal subunit protein bS21 from Phytoplasma mali (strain AT).